Reading from the N-terminus, the 82-residue chain is Small ribosomal subunit protein bS16 (82 aa).

Belongs to the bacterial ribosomal protein bS16 family.

In Vibrio vulnificus (strain CMCP6), this protein is Small ribosomal subunit protein bS16.